The chain runs to 369 residues: Flagellar P-ring protein (369 aa).

The first 23 residues, 1–23 (MRIASFFTVLLTLLTLNIAPASA), serve as a signal peptide directing secretion.

Belongs to the FlgI family. The basal body constitutes a major portion of the flagellar organelle and consists of four rings (L,P,S, and M) mounted on a central rod.

It localises to the periplasm. The protein resides in the bacterial flagellum basal body. Assembles around the rod to form the L-ring and probably protects the motor/basal body from shearing forces during rotation. The polypeptide is Flagellar P-ring protein (Pectobacterium carotovorum subsp. carotovorum (strain PC1)).